The primary structure comprises 416 residues: Gamma-glutamyl phosphate reductase (416 aa).

Belongs to the gamma-glutamyl phosphate reductase family.

The protein localises to the cytoplasm. It catalyses the reaction L-glutamate 5-semialdehyde + phosphate + NADP(+) = L-glutamyl 5-phosphate + NADPH + H(+). The protein operates within amino-acid biosynthesis; L-proline biosynthesis; L-glutamate 5-semialdehyde from L-glutamate: step 2/2. Functionally, catalyzes the NADPH-dependent reduction of L-glutamate 5-phosphate into L-glutamate 5-semialdehyde and phosphate. The product spontaneously undergoes cyclization to form 1-pyrroline-5-carboxylate. This is Gamma-glutamyl phosphate reductase from Streptococcus thermophilus (strain ATCC BAA-491 / LMD-9).